Reading from the N-terminus, the 258-residue chain is Triosephosphate isomerase (258 aa).

11–13 (NWK) contacts substrate. Residue His101 is the Electrophile of the active site. The active-site Proton acceptor is Glu173. Substrate contacts are provided by residues Gly179, Ser219, and 240–241 (GG).

The protein belongs to the triosephosphate isomerase family. As to quaternary structure, homodimer.

The protein resides in the cytoplasm. It carries out the reaction D-glyceraldehyde 3-phosphate = dihydroxyacetone phosphate. It participates in carbohydrate biosynthesis; gluconeogenesis. The protein operates within carbohydrate degradation; glycolysis; D-glyceraldehyde 3-phosphate from glycerone phosphate: step 1/1. In terms of biological role, involved in the gluconeogenesis. Catalyzes stereospecifically the conversion of dihydroxyacetone phosphate (DHAP) to D-glyceraldehyde-3-phosphate (G3P). The sequence is that of Triosephosphate isomerase from Streptomyces coelicolor (strain ATCC BAA-471 / A3(2) / M145).